We begin with the raw amino-acid sequence, 246 residues long: Thaumatin-like protein 1 (246 aa).

The N-terminal stretch at 1–24 (MMKSQAALLGLTTLAILFFSGAHA) is a signal peptide. 8 disulfides stabilise this stretch: Cys33–Cys245, Cys81–Cys91, Cys96–Cys103, Cys151–Cys234, Cys156–Cys217, Cys164–Cys180, Cys184–Cys193, and Cys194–Cys204.

It belongs to the thaumatin family. As to expression, equally expressed in the abscission zone and surrounding tissues of both fruitlets and leaves.

Its subcellular location is the secreted. In terms of biological role, may be involved in protecting plant tissues from pathogen infection. The chain is Thaumatin-like protein 1 from Prunus persica (Peach).